A 179-amino-acid chain; its full sequence is MSLKEYSQEQLKHMSLVELAYEIFRDSKTPITFSELIDEMVRLQGIQKSDLDDRLAQFYTDLNIDGRFISLGDQRWGLRSWYPVDQIEEEVQPAVKTKAKKKKTKAAVVEEDFDEIEEEEEIEELEEDLDLVEDDDDLDLDDDEEIEEEIEDFDEDDDEDDDGLTEIDEDDLDDNEEEK.

The region spanning 14–81 (MSLVELAYEI…GDQRWGLRSW (68 aa)) is the HTH HARE-type domain. The disordered stretch occupies residues 108 to 179 (VVEEDFDEIE…DDLDDNEEEK (72 aa)). Residues 109–179 (VEEDFDEIEE…DDLDDNEEEK (71 aa)) show a composition bias toward acidic residues.

Belongs to the RpoE family. RNAP is composed of a core of 2 alpha, a beta and a beta' subunits. The core is associated with a delta subunit and one of several sigma factors.

Its function is as follows. Participates in both the initiation and recycling phases of transcription. In the presence of the delta subunit, RNAP displays an increased specificity of transcription, a decreased affinity for nucleic acids, and an increased efficiency of RNA synthesis because of enhanced recycling. The chain is Probable DNA-directed RNA polymerase subunit delta from Bacillus pumilus (strain SAFR-032).